A 295-amino-acid polypeptide reads, in one-letter code: F-box only protein 8 (295 aa).

One can recognise an F-box domain in the interval 35–80 (TWVARYIPQDLLIEILTRLPPKSVMRFKCVSKFWSSLLSSRYFCNR).

This is F-box only protein 8 (FBX8) from Arabidopsis thaliana (Mouse-ear cress).